The following is a 1681-amino-acid chain: Probable clathrin heavy chain 1 (1681 aa).

WD40-like repeat stretches follow at residues 22–65 (NITF…RPIS), 66–105 (ADSV…NVED), 106–147 (VVYW…QSLA), 148–193 (GTQI…QPIE), 194–255 (GHAA…ADTA), 256–299 (GDFP…ISTD), and 300–328 (TVFV…VSID). CHCR repeat units follow at residues 539–685 (SENG…QVVV), 688–830 (ASKY…SEDA), 835–974 (IINT…QLID), 981–1126 (LSET…VKEA), 1130–1271 (FIKA…FRLA), 1276–1422 (LHIV…LLLN), and 1425–1568 (LTVL…YDCF). Positions 1616 to 1628 (ERSEHERKEEKAE) are enriched in basic and acidic residues. Residues 1616 to 1635 (ERSEHERKEEKAEQQQNNGM) are disordered.

This sequence belongs to the clathrin heavy chain family. Clathrin triskelions, composed of 3 heavy chains and 3 light chains, are the basic subunits of the clathrin coat. May interact with beta arrestin arr-1.

Its subcellular location is the cytoplasmic vesicle membrane. It is found in the membrane. The protein localises to the coated pit. Its function is as follows. Clathrin is the major protein of the polyhedral coat of coated pits and vesicles. May play a role in yolk protein clatherin-mediated endocytosis by oocytes during oogenesis. This Caenorhabditis elegans protein is Probable clathrin heavy chain 1 (chc-1).